A 157-amino-acid polypeptide reads, in one-letter code: Transcription elongation factor GreA (157 aa).

The segment at 1–24 (MDKFPMTPEGYHALDEELKRRQQE) is disordered. Over residues 12-24 (HALDEELKRRQQE) the composition is skewed to basic and acidic residues. Positions 53–73 (EAQSLNEGRIAELEDKLSRAE) form a coiled coil.

The protein belongs to the GreA/GreB family.

Functionally, necessary for efficient RNA polymerase transcription elongation past template-encoded arresting sites. The arresting sites in DNA have the property of trapping a certain fraction of elongating RNA polymerases that pass through, resulting in locked ternary complexes. Cleavage of the nascent transcript by cleavage factors such as GreA or GreB allows the resumption of elongation from the new 3'terminus. GreA releases sequences of 2 to 3 nucleotides. In Beijerinckia indica subsp. indica (strain ATCC 9039 / DSM 1715 / NCIMB 8712), this protein is Transcription elongation factor GreA.